We begin with the raw amino-acid sequence, 178 residues long: Peptide methionine sulfoxide reductase MsrA (178 aa).

C12 is an active-site residue.

It belongs to the MsrA Met sulfoxide reductase family.

The catalysed reaction is L-methionyl-[protein] + [thioredoxin]-disulfide + H2O = L-methionyl-(S)-S-oxide-[protein] + [thioredoxin]-dithiol. The enzyme catalyses [thioredoxin]-disulfide + L-methionine + H2O = L-methionine (S)-S-oxide + [thioredoxin]-dithiol. In terms of biological role, has an important function as a repair enzyme for proteins that have been inactivated by oxidation. Catalyzes the reversible oxidation-reduction of methionine sulfoxide in proteins to methionine. This Erwinia tasmaniensis (strain DSM 17950 / CFBP 7177 / CIP 109463 / NCPPB 4357 / Et1/99) protein is Peptide methionine sulfoxide reductase MsrA.